A 151-amino-acid polypeptide reads, in one-letter code: Small ribosomal subunit protein uS15 (151 aa).

Positions 1 to 20 (MARLHSGKRGSSGSTRPLRT) are disordered.

It belongs to the universal ribosomal protein uS15 family. Part of the 30S ribosomal subunit.

This Methanococcus aeolicus (strain ATCC BAA-1280 / DSM 17508 / OCM 812 / Nankai-3) protein is Small ribosomal subunit protein uS15.